The sequence spans 498 residues: Glycerol kinase (498 aa).

T12 is a binding site for ADP. ATP is bound by residues T12, T13, and S14. T12 lines the sn-glycerol 3-phosphate pocket. R16 is a binding site for ADP. 4 residues coordinate sn-glycerol 3-phosphate: R82, E83, Y134, and D243. Residues R82, E83, Y134, D243, and Q244 each coordinate glycerol. Positions 265 and 308 each coordinate ADP. ATP-binding residues include T265, G308, Q312, and G409. G409 and N413 together coordinate ADP.

Belongs to the FGGY kinase family.

The catalysed reaction is glycerol + ATP = sn-glycerol 3-phosphate + ADP + H(+). It functions in the pathway polyol metabolism; glycerol degradation via glycerol kinase pathway; sn-glycerol 3-phosphate from glycerol: step 1/1. With respect to regulation, inhibited by fructose 1,6-bisphosphate (FBP). Key enzyme in the regulation of glycerol uptake and metabolism. Catalyzes the phosphorylation of glycerol to yield sn-glycerol 3-phosphate. This chain is Glycerol kinase, found in Petrotoga mobilis (strain DSM 10674 / SJ95).